The primary structure comprises 152 residues: Acidic phospholipase A2 S16-19 (152 aa).

The signal sequence occupies residues 1–19 (MYPAHLLVLLAVCVSLLGA). A propeptide spanning residues 20-27 (SNIPLPSL) is cleaved from the precursor. Intrachain disulfides connect Cys38–Cys104, Cys54–Cys151, Cys71–Cys132, Cys78–Cys125, Cys88–Cys118, and Cys111–Cys123. The Ca(2+) site is built by Tyr55, Gly57, and Gly59. Residue His75 is part of the active site. Asp76 serves as a coordination point for Ca(2+). The active site involves Asp126.

Belongs to the phospholipase A2 family. Group I subfamily. D49 sub-subfamily. The cofactor is Ca(2+). Post-translationally, this enzyme lacks one of the seven disulfide bonds found in similar PLA2 proteins. Expressed by the venom gland.

The protein localises to the secreted. The enzyme catalyses a 1,2-diacyl-sn-glycero-3-phosphocholine + H2O = a 1-acyl-sn-glycero-3-phosphocholine + a fatty acid + H(+). In terms of biological role, snake venom phospholipase A2 (PLA2) that inhibits collagen-induced platelet aggregation. PLA2 catalyzes the calcium-dependent hydrolysis of the 2-acyl groups in 3-sn-phosphoglycerides. This Austrelaps superbus (Lowland copperhead snake) protein is Acidic phospholipase A2 S16-19.